Reading from the N-terminus, the 101-residue chain is Small ribosomal subunit protein uS10 (101 aa).

It belongs to the universal ribosomal protein uS10 family. Part of the 30S ribosomal subunit.

Its function is as follows. Involved in the binding of tRNA to the ribosomes. In Cytophaga hutchinsonii (strain ATCC 33406 / DSM 1761 / CIP 103989 / NBRC 15051 / NCIMB 9469 / D465), this protein is Small ribosomal subunit protein uS10.